The primary structure comprises 283 residues: Elongation factor Ts (283 aa).

Positions 80-83 (TDFV) are involved in Mg(2+) ion dislocation from EF-Tu.

It belongs to the EF-Ts family.

The protein localises to the cytoplasm. Associates with the EF-Tu.GDP complex and induces the exchange of GDP to GTP. It remains bound to the aminoacyl-tRNA.EF-Tu.GTP complex up to the GTP hydrolysis stage on the ribosome. The chain is Elongation factor Ts from Histophilus somni (strain 129Pt) (Haemophilus somnus).